The following is a 213-amino-acid chain: Uridine kinase (213 aa).

An ATP-binding site is contributed by 15-22; the sequence is GASASGKS.

It belongs to the uridine kinase family.

It localises to the cytoplasm. The catalysed reaction is uridine + ATP = UMP + ADP + H(+). The enzyme catalyses cytidine + ATP = CMP + ADP + H(+). It participates in pyrimidine metabolism; CTP biosynthesis via salvage pathway; CTP from cytidine: step 1/3. Its pathway is pyrimidine metabolism; UMP biosynthesis via salvage pathway; UMP from uridine: step 1/1. The chain is Uridine kinase from Pectobacterium atrosepticum (strain SCRI 1043 / ATCC BAA-672) (Erwinia carotovora subsp. atroseptica).